The sequence spans 75 residues: Serine rich endogenous peptide 20 (75 aa).

The first 25 residues, 1–25 (MYKLTLCILTLSFLLLSGLSNTVLA), serve as a signal peptide directing secretion. An SCOOP motif motif is present at residues 52-66 (KIGASGSNSGRAPSC). The tract at residues 54–75 (GASGSNSGRAPSCNNSCKPNRP) is disordered. Positions 56-58 (SGS) match the SxS motif essential for MIK2 binding motif. Positions 56 to 75 (SGSNSGRAPSCNNSCKPNRP) are enriched in polar residues.

Belongs to the serine rich endogenous peptide (SCOOP) phytocytokine family. Interacts with MIK2 (via extracellular leucine-rich repeat domain); this interaction triggers the formation of complex between MIK2 and the BAK1/SERK3 and SERK4 coreceptors, and subsequent BAK1 activation by phosphorylation. Mostly expressed in roots.

It localises to the cell membrane. The protein localises to the secreted. It is found in the extracellular space. Its subcellular location is the apoplast. Functionally, brassicaceae-specific phytocytokine (plant endogenous peptide released into the apoplast) perceived by MIK2 in a BAK1/SERK3 and SERK4 coreceptors-dependent manner, that modulates various physiological and antimicrobial processes including growth prevention and reactive oxygen species (ROS) response regulation. Inhibits root growth. The polypeptide is Serine rich endogenous peptide 20 (Arabidopsis thaliana (Mouse-ear cress)).